Consider the following 359-residue polypeptide: MEIYADQKYTKLVSHLYYQNSHEIVHSSKIYQLALTNPDILSQYINYPDESNESHESHDCHESQNSTHYKFRLMEIYHKMIIIDNNMDLLDLLFEIMSDDFRCDDCVILDLAIRHQRTDVFNKYIILGFDLNRLINSSTILDEIILWYHQIKKYDTGIELCDYLIDNGASISIHNYCTIINAFDTLNDKYVSFFLNKISLNDLGNLLFWYLRNYYNVNIDIVETILSNGIDINNFHEYSYMLIGKFNVPIMNLFIRYGLIIHDDVIDDACRYGNHLLVDYLMEIGHKPSKQIITNVIENHNVNIIKLFVKYNIDLSDIKPPTSPEIIQLVKSLESNGLSVDYVYGYILDKFNLSGKLCI.

7 ANK repeats span residues 72 to 103, 105 to 133, 142 to 173, 203 to 234, 236 to 260, 261 to 287, and 288 to 317; these read RLME…DFRC, DCVI…DLNR, DEII…SISI, LGNL…DINN, HEYS…YGLI, IHDD…IGHK, and PSKQ…DLSD.

In Acanthamoeba polyphaga (Amoeba), this protein is Putative ankyrin repeat protein R190.